Consider the following 158-residue polypeptide: Transcription elongation factor GreA (158 aa).

It belongs to the GreA/GreB family.

In terms of biological role, necessary for efficient RNA polymerase transcription elongation past template-encoded arresting sites. The arresting sites in DNA have the property of trapping a certain fraction of elongating RNA polymerases that pass through, resulting in locked ternary complexes. Cleavage of the nascent transcript by cleavage factors such as GreA or GreB allows the resumption of elongation from the new 3'terminus. GreA releases sequences of 2 to 3 nucleotides. The chain is Transcription elongation factor GreA from Hamiltonella defensa subsp. Acyrthosiphon pisum (strain 5AT).